Consider the following 470-residue polypeptide: Uronate isomerase (470 aa).

This sequence belongs to the metallo-dependent hydrolases superfamily. Uronate isomerase family.

The enzyme catalyses D-glucuronate = D-fructuronate. The catalysed reaction is aldehydo-D-galacturonate = keto-D-tagaturonate. It functions in the pathway carbohydrate metabolism; pentose and glucuronate interconversion. This is Uronate isomerase from Salmonella newport (strain SL254).